Consider the following 278-residue polypeptide: 3-methyl-2-oxobutanoate hydroxymethyltransferase (278 aa).

The Mg(2+) site is built by D43 and D82. 3-methyl-2-oxobutanoate contacts are provided by residues 43 to 44 (DS), D82, and K112. E114 lines the Mg(2+) pocket. Residue E181 is the Proton acceptor of the active site.

This sequence belongs to the PanB family. As to quaternary structure, homodecamer; pentamer of dimers. The cofactor is Mg(2+).

Its subcellular location is the cytoplasm. The enzyme catalyses 3-methyl-2-oxobutanoate + (6R)-5,10-methylene-5,6,7,8-tetrahydrofolate + H2O = 2-dehydropantoate + (6S)-5,6,7,8-tetrahydrofolate. The protein operates within cofactor biosynthesis; (R)-pantothenate biosynthesis; (R)-pantoate from 3-methyl-2-oxobutanoate: step 1/2. Its function is as follows. Catalyzes the reversible reaction in which hydroxymethyl group from 5,10-methylenetetrahydrofolate is transferred onto alpha-ketoisovalerate to form ketopantoate. This is 3-methyl-2-oxobutanoate hydroxymethyltransferase from Bacillus cereus (strain ATCC 14579 / DSM 31 / CCUG 7414 / JCM 2152 / NBRC 15305 / NCIMB 9373 / NCTC 2599 / NRRL B-3711).